A 186-amino-acid chain; its full sequence is Peptidyl-tRNA hydrolase (186 aa).

Residue Y16 coordinates tRNA. The active-site Proton acceptor is H21. Positions 66, 68, and 114 each coordinate tRNA.

The protein belongs to the PTH family. Monomer.

It localises to the cytoplasm. It catalyses the reaction an N-acyl-L-alpha-aminoacyl-tRNA + H2O = an N-acyl-L-amino acid + a tRNA + H(+). Hydrolyzes ribosome-free peptidyl-tRNAs (with 1 or more amino acids incorporated), which drop off the ribosome during protein synthesis, or as a result of ribosome stalling. Functionally, catalyzes the release of premature peptidyl moieties from peptidyl-tRNA molecules trapped in stalled 50S ribosomal subunits, and thus maintains levels of free tRNAs and 50S ribosomes. This Ureaplasma urealyticum serovar 10 (strain ATCC 33699 / Western) protein is Peptidyl-tRNA hydrolase.